The sequence spans 344 residues: Thioredoxin domain-containing protein 15 (344 aa).

Positions 1–20 (MQLLCWWQVLLWVLGLPAHG) are cleaved as a signal peptide. Topologically, residues 21–305 (LEVAEDSGHP…GPLPSTLIKT (285 aa)) are extracellular. Disordered regions lie at residues 55 to 119 (DHRD…FGLQ) and 136 to 156 (GVTEAEPVATEDANSTDSLKS). A compositionally biased stretch (basic and acidic residues) spans 88 to 97 (EDQRSPEAHD). In terms of domain architecture, Thioredoxin spans 163–280 (ERNVTGLENF…LKIFIFNQTG (118 aa)). 4 N-linked (GlcNAc...) asparagine glycosylation sites follow: Asn-171, Asn-178, Asn-190, and Asn-277. The chain crosses the membrane as a helical span at residues 306–326 (VDWLLVFSLFFLISFIMYATI). At 327-344 (RTESIRWLIPGQEQEHAE) the chain is on the cytoplasmic side.

Its subcellular location is the cell projection. The protein localises to the cilium membrane. Its function is as follows. Acts as a positive regulator of ciliary hedgehog signaling. Required for cilia biogenesis. In Mus musculus (Mouse), this protein is Thioredoxin domain-containing protein 15 (Txndc15).